We begin with the raw amino-acid sequence, 283 residues long: MTVYAVGDLQGCLEPLKCLLERVAFDPAKDRLWLVGDLVNRGPQSLETLRFLYAMREAVVSVLGNHDLHLLAVAHRSERLKKSDTLREILEAPDREALLDWLRRLPLLHYDEQRQVTLVHAGIPPQWSLEKARLRAAEVEEALRDDQRLPLFLEGMYGNEPAKWDKKLHGIERLRVITNYFTRMRFCTEDGRLDLKSKEGLDTAPPGYAPWFSFASRKTRGEKIIFGHWAALEGQCDEPGLFALDTGCVWGAKMTLLNVDSGERLSCDCAGQQASAKPAGPPA.

The protein belongs to the Ap4A hydrolase family.

It carries out the reaction P(1),P(4)-bis(5'-adenosyl) tetraphosphate + H2O = 2 ADP + 2 H(+). Functionally, hydrolyzes diadenosine 5',5'''-P1,P4-tetraphosphate to yield ADP. This Pseudomonas paraeruginosa (strain DSM 24068 / PA7) (Pseudomonas aeruginosa (strain PA7)) protein is Bis(5'-nucleosyl)-tetraphosphatase, symmetrical.